The following is a 241-amino-acid chain: Putative integrase ORF241 (241 aa).

Residues 82 to 241 (VEAKKTLVSA…AIEMLRKLAD (160 aa)) form the Tyr recombinase domain. Active-site residues include arginine 119, lysine 144, histidine 191, arginine 194, and histidine 217. The O-(3'-phospho-DNA)-tyrosine intermediate role is filled by tyrosine 226.

Belongs to the 'phage' integrase family.

In terms of biological role, this protein may encode an integrase, which is necessary for integration of the viral DNA into host genome. This Acidianus convivator (ATV) protein is Putative integrase ORF241.